We begin with the raw amino-acid sequence, 147 residues long: E3 ubiquitin-protein ligase RNF181 homolog (147 aa).

The segment at Cys-70–Arg-111 adopts an RING-type; atypical zinc-finger fold.

It belongs to the RNF181 family.

The catalysed reaction is S-ubiquitinyl-[E2 ubiquitin-conjugating enzyme]-L-cysteine + [acceptor protein]-L-lysine = [E2 ubiquitin-conjugating enzyme]-L-cysteine + N(6)-ubiquitinyl-[acceptor protein]-L-lysine.. The protein operates within protein modification; protein ubiquitination. Its function is as follows. E3 ubiquitin-protein ligase which accepts ubiquitin from an E2 ubiquitin-conjugating enzyme in the form of a thioester and then directly transfers the ubiquitin to targeted substrates. The protein is E3 ubiquitin-protein ligase RNF181 homolog of Drosophila melanogaster (Fruit fly).